Consider the following 81-residue polypeptide: Photosystem I iron-sulfur center (81 aa).

2 consecutive 4Fe-4S ferredoxin-type domains span residues Met-1–Trp-31 and Ile-39–Tyr-68. [4Fe-4S] cluster is bound by residues Cys-11, Cys-14, Cys-17, Cys-21, Cys-48, Cys-51, Cys-54, and Cys-58.

The eukaryotic PSI reaction center is composed of at least 11 subunits. [4Fe-4S] cluster serves as cofactor.

It localises to the plastid. The protein localises to the chloroplast thylakoid membrane. The catalysed reaction is reduced [plastocyanin] + hnu + oxidized [2Fe-2S]-[ferredoxin] = oxidized [plastocyanin] + reduced [2Fe-2S]-[ferredoxin]. Functionally, apoprotein for the two 4Fe-4S centers FA and FB of photosystem I (PSI); essential for photochemical activity. FB is the terminal electron acceptor of PSI, donating electrons to ferredoxin. The C-terminus interacts with PsaA/B/D and helps assemble the protein into the PSI complex. Required for binding of PsaD and PsaE to PSI. PSI is a plastocyanin-ferredoxin oxidoreductase, converting photonic excitation into a charge separation, which transfers an electron from the donor P700 chlorophyll pair to the spectroscopically characterized acceptors A0, A1, FX, FA and FB in turn. The sequence is that of Photosystem I iron-sulfur center from Welwitschia mirabilis (Tree tumbo).